The chain runs to 345 residues: Holliday junction branch migration complex subunit RuvB (345 aa).

A large ATPase domain (RuvB-L) region spans residues 4-185 (TDRLIAPSTQ…FGIVSRLEFY (182 aa)). ATP is bound by residues Leu-24, Arg-25, Gly-66, Lys-69, Thr-70, Thr-71, 132–134 (EDY), Arg-175, Tyr-185, and Arg-222. Thr-70 serves as a coordination point for Mg(2+). The small ATPAse domain (RuvB-S) stretch occupies residues 186–256 (TADELARIVH…IADAALKMLD (71 aa)). Residues 259 to 345 (KLGFDVMDRK…KIGTGELWQQ (87 aa)) are head domain (RuvB-H). 3 residues coordinate DNA: Arg-295, Arg-314, and Arg-319.

The protein belongs to the RuvB family. As to quaternary structure, homohexamer. Forms an RuvA(8)-RuvB(12)-Holliday junction (HJ) complex. HJ DNA is sandwiched between 2 RuvA tetramers; dsDNA enters through RuvA and exits via RuvB. An RuvB hexamer assembles on each DNA strand where it exits the tetramer. Each RuvB hexamer is contacted by two RuvA subunits (via domain III) on 2 adjacent RuvB subunits; this complex drives branch migration. In the full resolvosome a probable DNA-RuvA(4)-RuvB(12)-RuvC(2) complex forms which resolves the HJ.

The protein localises to the cytoplasm. It catalyses the reaction ATP + H2O = ADP + phosphate + H(+). In terms of biological role, the RuvA-RuvB-RuvC complex processes Holliday junction (HJ) DNA during genetic recombination and DNA repair, while the RuvA-RuvB complex plays an important role in the rescue of blocked DNA replication forks via replication fork reversal (RFR). RuvA specifically binds to HJ cruciform DNA, conferring on it an open structure. The RuvB hexamer acts as an ATP-dependent pump, pulling dsDNA into and through the RuvAB complex. RuvB forms 2 homohexamers on either side of HJ DNA bound by 1 or 2 RuvA tetramers; 4 subunits per hexamer contact DNA at a time. Coordinated motions by a converter formed by DNA-disengaged RuvB subunits stimulates ATP hydrolysis and nucleotide exchange. Immobilization of the converter enables RuvB to convert the ATP-contained energy into a lever motion, pulling 2 nucleotides of DNA out of the RuvA tetramer per ATP hydrolyzed, thus driving DNA branch migration. The RuvB motors rotate together with the DNA substrate, which together with the progressing nucleotide cycle form the mechanistic basis for DNA recombination by continuous HJ branch migration. Branch migration allows RuvC to scan DNA until it finds its consensus sequence, where it cleaves and resolves cruciform DNA. This chain is Holliday junction branch migration complex subunit RuvB, found in Methylobacillus flagellatus (strain ATCC 51484 / DSM 6875 / VKM B-1610 / KT).